A 92-amino-acid chain; its full sequence is Small ribosomal subunit protein uS19 (92 aa).

Belongs to the universal ribosomal protein uS19 family.

In terms of biological role, protein S19 forms a complex with S13 that binds strongly to the 16S ribosomal RNA. The sequence is that of Small ribosomal subunit protein uS19 from Allorhizobium ampelinum (strain ATCC BAA-846 / DSM 112012 / S4) (Agrobacterium vitis (strain S4)).